A 312-amino-acid polypeptide reads, in one-letter code: Ubiquinone biosynthesis protein COQ9, mitochondrial (312 aa).

A mitochondrion-targeting transit peptide spans 1–45 (MAATAAVSGVLRRLGWRLLQLRCLPVARCQSPLMPRAFHTAVGFR). Positions 17 to 32 (RLLQLRCLPVARCQSP) match the SIFI-degron motif. The tract at residues 43–92 (GFRSSEEQRQQPPHSSQQHSETQGPEFSRPPPRYTDQSGEEEEDYESEEQ) is disordered. Residues 52 to 63 (QQPPHSSQQHSE) show a composition bias toward low complexity. Serine 80 is subject to Phosphoserine. Residues 80 to 91 (SGEEEEDYESEE) are compositionally biased toward acidic residues. Lysine 169 carries the N6-acetyllysine modification. Position 238 (arginine 238) interacts with a 1,2-diacylglycero-3-phosphoethanolamine.

The protein belongs to the COQ9 family. As to quaternary structure, homodimer. Heterodimer; two heterodimers of COQ7:COQ9 come together on the same side of the lipid pseudo-bilayer and form a curved tetramer with a hydrophobic surface suitable for membrane interaction. These two tetramers assemble into a soluble octamer with a pseudo-bilayer of lipids captured within. Interacts with COQ7; this interaction allows ubiquinone (CoQ) isoprene intermediates presentation to COQ7 and facilitates the COQ7-mediated hydroxylase step. In terms of processing, in response to mitochondrial stress, the precursor protein is ubiquitinated by the SIFI complex in the cytoplasm before mitochondrial import, leading to its degradation. Within the SIFI complex, UBR4 initiates ubiquitin chain that are further elongated or branched by KCMF1.

The protein resides in the mitochondrion. The protein operates within cofactor biosynthesis; ubiquinone biosynthesis. Functionally, membrane-associated protein that warps the membrane surface to access and bind aromatic isoprenes with high specificity, including ubiquinone (CoQ) isoprene intermediates and presents them directly to COQ7, therefore facilitating the COQ7-mediated hydroxylase step. Participates in the biosynthesis of coenzyme Q, also named ubiquinone, an essential lipid-soluble electron transporter for aerobic cellular respiration. This is Ubiquinone biosynthesis protein COQ9, mitochondrial from Rattus norvegicus (Rat).